The chain runs to 273 residues: Alkaline ceramidase 1 (273 aa).

Residues Met1–Glu36 are Lumenal-facing. Residues Asp22, Trp23, Glu25, Asn27, and Glu36 each contribute to the Ca(2+) site. The helical transmembrane segment at Phe37–Met57 threads the bilayer. The Cytoplasmic segment spans residues His58–Ser72. A run of 2 helical transmembrane segments spans residues Val73–Gly93 and Gln94–Pro114. His86 is a binding site for Zn(2+). Over Arg115–Arg126 the chain is Cytoplasmic. The helical transmembrane segment at Phe127–Lys147 threads the bilayer. Over Pro148–Thr149 the chain is Lumenal. Residues Val150–Arg167 form a helical membrane-spanning segment. Over Thr168–Asp177 the chain is Cytoplasmic. A helical membrane pass occupies residues Leu178–Ser198. Over Asp199 to His215 the chain is Lumenal. 2 residues coordinate Zn(2+): His215 and His219. The chain crosses the membrane as a helical span at residues Ser216–Val236. Residues Asp237 to Cys273 are Cytoplasmic-facing.

Belongs to the alkaline ceramidase family. Zn(2+) is required as a cofactor. As to expression, highly expressed in skin. Weakly or not expressed in other tissues. Expressed by granular layer of interfollicular epidermis, sebaceous glands and infundibulum.

The protein localises to the endoplasmic reticulum membrane. The enzyme catalyses an N-acylsphing-4-enine + H2O = sphing-4-enine + a fatty acid. It catalyses the reaction N-tetracosanoyl-sphing-4-enine + H2O = tetracosanoate + sphing-4-enine. It carries out the reaction an N-acylsphinganine + H2O = sphinganine + a fatty acid. The catalysed reaction is N-(9Z-octadecenoyl)-sphing-4-enine + H2O = sphing-4-enine + (9Z)-octadecenoate. The enzyme catalyses N-(15Z-tetracosenoyl)-sphing-4-enine + H2O = (15Z)-tetracosenoate + sphing-4-enine. It participates in lipid metabolism; sphingolipid metabolism. Inhibited by sphingosine. Inhibited by Mn(2+), Zn(2+), and Cu(2+) in a dose-dependent manner. Slightly activated by Ca(2+) in a dose-dependent manner. Its function is as follows. Endoplasmic reticulum ceramidase that catalyzes the hydrolysis of ceramides into sphingosine and free fatty acids at alkaline pH. Ceramides, sphingosine, and its phosphorylated form sphingosine-1-phosphate are bioactive lipids that mediate cellular signaling pathways regulating several biological processes including cell proliferation, apoptosis and differentiation. Exhibits a strong substrate specificity towards the natural stereoisomer of ceramides with D-erythro-sphingosine as a backbone and has a higher activity towards very long-chain unsaturated fatty acids like the C24:1-ceramide. May also hydrolyze dihydroceramides to produce dihydrosphingosine. ACER1 is a skin-specific ceramidase that regulates the levels of ceramides, sphingosine and sphingosine-1-phosphate in the epidermis, mediates the calcium-induced differentiation of epidermal keratinocytes and more generally plays an important role in skin homeostasis. The chain is Alkaline ceramidase 1 from Mus musculus (Mouse).